The primary structure comprises 159 residues: MNKKIFTLFLVVAASAIFAVSCNNKTTNPTSNSSEKKIVTEEDFKNAIEGLTYKTWAFTGKGKSFNFGSPITVEATSGSDSLAGVEKGFGNALKSALAAKGIDTGNITFDKGGASSSDKTSVSFKFTPKALGTSNFEEKLKSSVKEVEIKLTPKENWGA.

Residues methionine 1 to serine 21 form the signal peptide. The N-palmitoyl cysteine moiety is linked to residue cysteine 22. The S-diacylglycerol cysteine moiety is linked to residue cysteine 22.

Its subcellular location is the cell outer membrane. This chain is 16 kDa outer membrane lipoprotein (smpA), found in Brachyspira hyodysenteriae (Treponema hyodysenteriae).